Consider the following 1120-residue polypeptide: ELKS/Rab6-interacting/CAST family member 1 (1120 aa).

Positions 1 to 54 (MYGSARSVGKVEPSSQSPGRSPRLPRSPRLGHRRTNSTGGSSGNSVGGGSGKTL) are disordered. Lysine 10 is modified (N6-acetyllysine). Positions 13–28 (PSSQSPGRSPRLPRSP) are enriched in low complexity. Residues serine 17, serine 21, and serine 37 each carry the phosphoserine modification. Residue threonine 38 is modified to Phosphothreonine. Residues 40 to 51 (GSSGNSVGGGSG) are compositionally biased toward gly residues. Residues serine 55, serine 75, serine 94, serine 824, leucine 965, and serine 1009 each carry the phosphoserine modification. A coiled-coil region spans residues 144-992 (RQARDNTIMD…RMKLMADNYE (849 aa)). Residues 801–824 (KHKEQVEKKKSAQMLEEARRREDS) are compositionally biased toward basic and acidic residues. A disordered region spans residues 801-840 (KHKEQVEKKKSAQMLEEARRREDSLSDSSQQLQDSLRKKD). Threonine 1050 is subject to Phosphothreonine. An FIP-RBD domain is found at 1050 to 1112 (TPPASYNADG…DHCPDILEQV (63 aa)). Positions 1060–1104 (EQAAWENELQQMTQEQLQNELEKVEGDNAELQEFANTILQQIADH) form a coiled coil.

In terms of assembly, interacts with the GTB-bound forms of RAB6A isoform 1 and isoform 2 and with RAB6B. The interaction was strongest with RAB6B, followed by RAB6A isoform 2 and weakest with RAB6A isoform 1. Part of a complex with CHUK, IKBKB and IKBKG. Interacts with CHUK, IKBKB and IKBKG. The interaction with IKBKG is independent of CHUK and IKBKB. Interacts with NFKBIA. Isoform 2 interacts through its C-terminus with the PDZ domains of RIMS1 and RIMS2. Interacts with ERC2/CAST1. Interacts with SDCCAG8. Part of a cortical microtubule stabilization complex (CMSC) composed of KANK1, PPFIA1, PPFIBP1, ERC1/ELKS, PHLDB2/LL5beta, CLASPs, KIF21A and possibly additional interactors; within CMSCs KANK1 and PHLDB2/LL5beta appear to be the core components for targeting of microtubule-binding proteins KIF21A and CLASPs, whereas PPFIA1, PPFIBP1 and ERC1/ELKS serve as scaffolds for protein clustering. In terms of tissue distribution, widely expressed.

It is found in the cytoplasm. The protein localises to the cytoskeleton. The protein resides in the microtubule organizing center. Its subcellular location is the centrosome. It localises to the membrane. It is found in the golgi apparatus membrane. The protein localises to the presynaptic active zone. The protein resides in the cell projection. Its subcellular location is the podosome. Regulatory subunit of the IKK complex. Probably recruits IkappaBalpha/NFKBIA to the complex. May be involved in the organization of the cytomatrix at the nerve terminals active zone (CAZ) which regulates neurotransmitter release. May be involved in vesicle trafficking at the CAZ. May be involved in Rab-6 regulated endosomes to Golgi transport. The protein is ELKS/Rab6-interacting/CAST family member 1 of Mus musculus (Mouse).